Here is a 461-residue protein sequence, read N- to C-terminus: MKIPFVEPVICLSVFAVTLNSPLTTQYVYRRIWEETGNYSIALESNTSECAKNKSSPIFAFQEEVQKKVSLFNLEMDISGLIPGLVSTFVFLSHSDHGGRKFPLILSSVGALANSAWLCLLSYFALPIQLLIASTFIGALFGNYTTFLGASFAYIVDQCKEKKQRTIRIAIIDFLFGVVSGLTGLSSGYFIRGLGFVWSFLIVTVALFVNLIYILLFLEDSMKESSSQNISVSWTETFKNLFHRTYMLFKNASGEQQSLCCLLLFTMITYFFVTIGVSPIFVLYELDSPLCWDEVLIGYGSALGSVTFFSSFLGIWLFSYCMEDIHMAFIGTFTTMVGMAMTAFARTTLMMFLVRLPFLFTVMPLSVLRSMISKVVHSTEQGTMFACLAFLETLGGITAVSTFNGIYSATVAWCKGFVFLLSAVLLLIPAISLCVIKYVSRNTGSYVLLIQEESSEDTSDR.

Residues 1–25 (MKIPFVEPVICLSVFAVTLNSPLTT) form the signal peptide. The Extracellular portion of the chain corresponds to 26-70 (QYVYRRIWEETGNYSIALESNTSECAKNKSSPIFAFQEEVQKKVS). N-linked (GlcNAc...) asparagine glycans are attached at residues asparagine 38, asparagine 46, and asparagine 53. Residues 71 to 91 (LFNLEMDISGLIPGLVSTFVF) traverse the membrane as a helical segment. Topologically, residues 92–101 (LSHSDHGGRK) are cytoplasmic. Residues 102–124 (FPLILSSVGALANSAWLCLLSYF) traverse the membrane as a helical segment. Topologically, residues 125–133 (ALPIQLLIA) are extracellular. A helical transmembrane segment spans residues 134 to 156 (STFIGALFGNYTTFLGASFAYIV). Residues 157-170 (DQCKEKKQRTIRIA) lie on the Cytoplasmic side of the membrane. A helical membrane pass occupies residues 171–191 (IIDFLFGVVSGLTGLSSGYFI). At 192-195 (RGLG) the chain is on the extracellular side. The helical transmembrane segment at 196 to 216 (FVWSFLIVTVALFVNLIYILL) threads the bilayer. The Cytoplasmic portion of the chain corresponds to 217–261 (FLEDSMKESSSQNISVSWTETFKNLFHRTYMLFKNASGEQQSLCC). Residues 262 to 282 (LLLFTMITYFFVTIGVSPIFV) traverse the membrane as a helical segment. At 283-294 (LYELDSPLCWDE) the chain is on the extracellular side. Residues 295–315 (VLIGYGSALGSVTFFSSFLGI) form a helical membrane-spanning segment. Residues 316–324 (WLFSYCMED) lie on the Cytoplasmic side of the membrane. Residues 325–345 (IHMAFIGTFTTMVGMAMTAFA) form a helical membrane-spanning segment. The Extracellular portion of the chain corresponds to 346–347 (RT). Residues 348–368 (TLMMFLVRLPFLFTVMPLSVL) form a helical membrane-spanning segment. The Cytoplasmic segment spans residues 369–382 (RSMISKVVHSTEQG). Residues 383-403 (TMFACLAFLETLGGITAVSTF) traverse the membrane as a helical segment. Residues 404-415 (NGIYSATVAWCK) are Extracellular-facing. A helical membrane pass occupies residues 416–436 (GFVFLLSAVLLLIPAISLCVI). Over 437 to 461 (KYVSRNTGSYVLLIQEESSEDTSDR) the chain is Cytoplasmic. Positions 446–449 (YVLL) match the Tyrosine-based lysosomal-sorting motif motif.

This sequence belongs to the major facilitator superfamily. SLC46A family.

Its subcellular location is the lysosome membrane. The enzyme catalyses estrone 3-sulfate(out) + n H(+)(out) = estrone 3-sulfate(in) + n H(+)(in). It catalyses the reaction 25-hydroxyvitamin D3 sulfate(out) + n H(+)(out) = 25-hydroxyvitamin D3 sulfate(in) + n H(+)(in). It carries out the reaction cholate(out) + n H(+)(out) = cholate(in) + n H(+)(in). The catalysed reaction is glycocholate(out) + n H(+)(out) = glycocholate(in) + n H(+)(in). The enzyme catalyses taurocholate(out) + n H(+)(out) = taurocholate(in) + n H(+)(in). It catalyses the reaction dehydroepiandrosterone 3-sulfate(out) + n H(+)(out) = dehydroepiandrosterone 3-sulfate(in) + n H(+)(in). It carries out the reaction N-acetyl-D-muramoyl-L-alanyl-D-isoglutamine(out) + n H(+)(out) = N-acetyl-D-muramoyl-L-alanyl-D-isoglutamine(in) + n H(+)(in). The catalysed reaction is 2',3'-cGAMP(out) + n H(+)(out) = 2',3'-cGAMP(in) + n H(+)(in). Its function is as follows. Lysosomal proton-coupled steroid conjugate and bile acid transporter. Preferentially recognizes lipophilic steroid conjugates or bile acis as endogenous substrates and seems to mediate escape from lysosomes to the cytoplasm. Modulates hepatic cytosolic copper homeostasis, maybe acting as a lysosomal copper transporter and sequestering copper ions in the lysosome. Delivers pathogen-associated molecular patterns to cytosolic pattern recognition receptors as part of the innate immune response to microbes. Selectively transports bacterial muramyl dipeptide (MDP) into the cytosol for recognition by NOD2, triggering inflammatory responses. Likely acts as a redundant importer of cyclic GMP-AMP dinucleotides (cGAMPs) in monocyte and macrophage cell lineages. The transport mechanism, its electrogenicity and stoichiometry remain to be elucidated. The protein is Lysosomal proton-coupled steroid conjugate and bile acid symporter SLC46A3 (SLC46A3) of Bos taurus (Bovine).